The chain runs to 705 residues: Polyribonucleotide nucleotidyltransferase (705 aa).

The Mg(2+) site is built by Asp-485 and Asp-491. A KH domain is found at 552–611 (PKVFTMSINPSKIKDVIGAGGKTINKIIDETGVKIDIKEDGSVFVTAEDYESGKKALAMI). In terms of domain architecture, S1 motif spans 621 to 689 (GEVYLGKVTK…SMGRVNLSRK (69 aa)).

It belongs to the polyribonucleotide nucleotidyltransferase family. Mg(2+) serves as cofactor.

The protein resides in the cytoplasm. The enzyme catalyses RNA(n+1) + phosphate = RNA(n) + a ribonucleoside 5'-diphosphate. Its function is as follows. Involved in mRNA degradation. Catalyzes the phosphorolysis of single-stranded polyribonucleotides processively in the 3'- to 5'-direction. In Clostridium novyi (strain NT), this protein is Polyribonucleotide nucleotidyltransferase.